A 346-amino-acid polypeptide reads, in one-letter code: Beta-hexosaminidase (346 aa).

Substrate-binding positions include Asp-62, Arg-70, Arg-134, and Lys-164–His-165. His-177 (proton donor/acceptor) is an active-site residue. Residue Asp-249 is the Nucleophile of the active site.

This sequence belongs to the glycosyl hydrolase 3 family. NagZ subfamily.

The protein resides in the cytoplasm. It carries out the reaction Hydrolysis of terminal non-reducing N-acetyl-D-hexosamine residues in N-acetyl-beta-D-hexosaminides.. It participates in cell wall biogenesis; peptidoglycan recycling. Plays a role in peptidoglycan recycling by cleaving the terminal beta-1,4-linked N-acetylglucosamine (GlcNAc) from peptide-linked peptidoglycan fragments, giving rise to free GlcNAc, anhydro-N-acetylmuramic acid and anhydro-N-acetylmuramic acid-linked peptides. The protein is Beta-hexosaminidase of Actinobacillus succinogenes (strain ATCC 55618 / DSM 22257 / CCUG 43843 / 130Z).